A 931-amino-acid chain; its full sequence is Up-regulator of cell proliferation (931 aa).

A Phosphoserine modification is found at Ser3. A VLIG-type G domain is found at 689 to 929; it reads RSRLVVLSTV…NIQQLIELVR (241 aa).

Belongs to the TRAFAC class dynamin-like GTPase superfamily. Very large inducible GTPase (VLIG) family. Strongly expressed in hepatitis B virus-infected liver and in HCC cells. Also highly expressed in well-differentiated gastric cancer tissues and various gastric cancer cell lines.

The protein localises to the cytoplasm. It is found in the nucleus. Functionally, may be involved in cell cycle progression through the regulation of cyclin D1 expression. May participate in the development of hepatocellular carcinoma (HCC) by promoting hepatocellular growth and survival. May play an important role in development of gastric cancer. The polypeptide is Up-regulator of cell proliferation (URGCP) (Homo sapiens (Human)).